Consider the following 97-residue polypeptide: Co-chaperonin GroES (97 aa).

It belongs to the GroES chaperonin family. Heptamer of 7 subunits arranged in a ring. Interacts with the chaperonin GroEL.

Its subcellular location is the cytoplasm. In terms of biological role, together with the chaperonin GroEL, plays an essential role in assisting protein folding. The GroEL-GroES system forms a nano-cage that allows encapsulation of the non-native substrate proteins and provides a physical environment optimized to promote and accelerate protein folding. GroES binds to the apical surface of the GroEL ring, thereby capping the opening of the GroEL channel. The protein is Co-chaperonin GroES of Klebsiella pneumoniae (strain 342).